The sequence spans 584 residues: Alkaline nuclease (584 aa).

The segment at 409–429 is disordered; the sequence is GGGADHHLRGSPGDSPPPIPF.

It belongs to the herpesviridae alkaline nuclease family. In terms of assembly, interacts with major DNA-binding protein; this interaction increases the nuclease processivity of the alkaline exonuclease.

It is found in the host nucleus. It localises to the host cytoplasm. Plays a role in processing non linear or branched viral DNA intermediates in order to promote the production of mature packaged unit-length linear progeny viral DNA molecules. Exhibits endonuclease and exonuclease activities and accepts both double-stranded and single-stranded DNA as substrate. Exonuclease digestion of DNA is in the 5'-&gt; 3' direction and the products are 5'-monophosphate nucleosides. Additionally, forms a recombinase with the major DNA-binding protein, which displays strand exchange activity. This chain is Alkaline nuclease (UL98), found in Homo sapiens (Human).